The primary structure comprises 528 residues: DEAD-box ATP-dependent RNA helicase 6 (528 aa).

Low complexity-rich tracts occupy residues 1-15 and 65-80; these read MNNNNNNRGRFPPGI and QQYVQRGYPQQIQQQQ. The tract at residues 1 to 80 is disordered; the sequence is MNNNNNNRGR…GYPQQIQQQQ (80 aa). The Q motif motif lies at 154-182; that stretch reads NEFEDYFLKRDLLRGIYEKGFEKPSPIQE. A Helicase ATP-binding domain is found at 185–355; that stretch reads IPIALTGSDI…DRYLKKPYII (171 aa). 198–205 lines the ATP pocket; sequence AKNGTGKT. Residue Thr-260 is modified to Phosphothreonine. The short motif at 303–306 is the DEAD box element; it reads DEAD. One can recognise a Helicase C-terminal domain in the interval 365-525; sequence GVTQYYAFVE…PIPSLIDKAI (161 aa).

Belongs to the DEAD box helicase family. DDX6/DHH1 subfamily.

It localises to the cytoplasm. Its subcellular location is the P-body. The enzyme catalyses ATP + H2O = ADP + phosphate + H(+). In terms of biological role, ATP-dependent RNA helicase involved in mRNA turnover, and more specifically in mRNA decapping. This is DEAD-box ATP-dependent RNA helicase 6 (RH6) from Arabidopsis thaliana (Mouse-ear cress).